The sequence spans 218 residues: Adenylate kinase (218 aa).

An ATP-binding site is contributed by 10–15 (GAGKGT). Positions 30–59 (STGDMLRAAIAKGTPLGLSAQKIMESGGLV) are NMP. Residues T31, R36, 57 to 59 (GLV), 85 to 88 (GFPR), and Q92 contribute to the AMP site. Positions 122–159 (GRRIHQPSGRVYHVVNQPPKNPGVDDITGEPLIQRDDD) are LID. Residues R123 and 132–133 (VY) contribute to the ATP site. R156 and R167 together coordinate AMP. G203 lines the ATP pocket.

It belongs to the adenylate kinase family. Monomer.

It is found in the cytoplasm. It catalyses the reaction AMP + ATP = 2 ADP. Its pathway is purine metabolism; AMP biosynthesis via salvage pathway; AMP from ADP: step 1/1. In terms of biological role, catalyzes the reversible transfer of the terminal phosphate group between ATP and AMP. Plays an important role in cellular energy homeostasis and in adenine nucleotide metabolism. The chain is Adenylate kinase from Legionella pneumophila (strain Corby).